Reading from the N-terminus, the 328-residue chain is GMP reductase (328 aa).

Cysteine 176 acts as the Thioimidate intermediate in catalysis. Position 205–228 (205–228 (IIADGGIRTHGDIAKSIRFGASMI)) interacts with NADP(+).

Belongs to the IMPDH/GMPR family. GuaC type 2 subfamily.

It catalyses the reaction IMP + NH4(+) + NADP(+) = GMP + NADPH + 2 H(+). Its function is as follows. Catalyzes the irreversible NADPH-dependent deamination of GMP to IMP. It functions in the conversion of nucleobase, nucleoside and nucleotide derivatives of G to A nucleotides, and in maintaining the intracellular balance of A and G nucleotides. This chain is GMP reductase, found in Streptococcus pneumoniae serotype 4 (strain ATCC BAA-334 / TIGR4).